The sequence spans 341 residues: Uroporphyrinogen decarboxylase (341 aa).

Substrate-binding positions include 23 to 27 (RQAGR), Asp-73, Tyr-148, Ser-203, and His-318.

Belongs to the uroporphyrinogen decarboxylase family. As to quaternary structure, homodimer.

It is found in the cytoplasm. The enzyme catalyses uroporphyrinogen III + 4 H(+) = coproporphyrinogen III + 4 CO2. It participates in porphyrin-containing compound metabolism; protoporphyrin-IX biosynthesis; coproporphyrinogen-III from 5-aminolevulinate: step 4/4. Functionally, catalyzes the decarboxylation of four acetate groups of uroporphyrinogen-III to yield coproporphyrinogen-III. The protein is Uroporphyrinogen decarboxylase of Brucella suis (strain ATCC 23445 / NCTC 10510).